We begin with the raw amino-acid sequence, 1187 residues long: uncharacterized protein (1187 aa).

Positions 38 to 57 (KNNQDIPTSNTNISPKPISQ) are enriched in polar residues. 8 disordered regions span residues 38-127 (KNNQ…NSPT), 189-215 (ISRS…IHLN), 248-287 (TQPP…SQLQ), 358-415 (NNNS…NSNS), 443-490 (FPNN…INNN), 536-689 (QFPF…SSLN), 752-840 (SINN…NKSI), and 1079-1187 (HNNN…NLQK). Composition is skewed to low complexity over residues 71 to 84 (KPIV…STLI), 104 to 124 (PSSS…SIPN), 190 to 215 (SRSS…IHLN), and 248 to 274 (TQPP…QAPH). Residues 443-455 (FPNNTDENYPSDH) show a composition bias toward polar residues. Composition is skewed to low complexity over residues 458-490 (NDNN…INNN), 543-570 (TTES…SSSA), 585-653 (INNL…SNIN), 662-689 (PNSP…SSLN), 752-790 (SINN…TTNN), and 797-809 (NYKI…NIDN). Residues 815–832 (NDDDNDDDDDDDVDDNDD) are compositionally biased toward acidic residues. Composition is skewed to low complexity over residues 1079–1149 (HNNN…PSNN) and 1156–1174 (KNNN…NNTN).

This is an uncharacterized protein from Dictyostelium discoideum (Social amoeba).